The primary structure comprises 85 residues: Defensin-like protein 11 (85 aa).

An N-terminal signal peptide occupies residues 1–29; sequence MGKTISFSAIILVFLLVSTGLMKQGDAQA. Cystine bridges form between Cys-32–Cys-84, Cys-44–Cys-68, Cys-54–Cys-75, and Cys-58–Cys-77.

The protein belongs to the DEFL family.

Its subcellular location is the secreted. The protein is Defensin-like protein 11 of Arabidopsis thaliana (Mouse-ear cress).